A 150-amino-acid polypeptide reads, in one-letter code: UPF0735 ACT domain-containing protein DSY2247 (150 aa).

The region spanning 74–149 (TFSLTLENTA…GVRKIEVIGQ (76 aa)) is the ACT domain.

This sequence belongs to the UPF0735 family.

The protein is UPF0735 ACT domain-containing protein DSY2247 of Desulfitobacterium hafniense (strain Y51).